We begin with the raw amino-acid sequence, 345 residues long: S-adenosylmethionine:tRNA ribosyltransferase-isomerase (345 aa).

This sequence belongs to the QueA family. As to quaternary structure, monomer.

It is found in the cytoplasm. The catalysed reaction is 7-aminomethyl-7-carbaguanosine(34) in tRNA + S-adenosyl-L-methionine = epoxyqueuosine(34) in tRNA + adenine + L-methionine + 2 H(+). The protein operates within tRNA modification; tRNA-queuosine biosynthesis. In terms of biological role, transfers and isomerizes the ribose moiety from AdoMet to the 7-aminomethyl group of 7-deazaguanine (preQ1-tRNA) to give epoxyqueuosine (oQ-tRNA). The chain is S-adenosylmethionine:tRNA ribosyltransferase-isomerase from Helicobacter pylori (strain P12).